The chain runs to 358 residues: Chorismate synthase (358 aa).

NADP(+) is bound at residue R47. Residues 124–126 (RSS), 240–241 (NA), G284, 299–303 (KPVAT), and R325 each bind FMN.

The protein belongs to the chorismate synthase family. As to quaternary structure, homotetramer. It depends on FMNH2 as a cofactor.

The enzyme catalyses 5-O-(1-carboxyvinyl)-3-phosphoshikimate = chorismate + phosphate. The protein operates within metabolic intermediate biosynthesis; chorismate biosynthesis; chorismate from D-erythrose 4-phosphate and phosphoenolpyruvate: step 7/7. Its function is as follows. Catalyzes the anti-1,4-elimination of the C-3 phosphate and the C-6 proR hydrogen from 5-enolpyruvylshikimate-3-phosphate (EPSP) to yield chorismate, which is the branch point compound that serves as the starting substrate for the three terminal pathways of aromatic amino acid biosynthesis. This reaction introduces a second double bond into the aromatic ring system. This chain is Chorismate synthase, found in Phocaeicola vulgatus (strain ATCC 8482 / DSM 1447 / JCM 5826 / CCUG 4940 / NBRC 14291 / NCTC 11154) (Bacteroides vulgatus).